Consider the following 70-residue polypeptide: ATP synthase subunit c (70 aa).

A run of 2 helical transmembrane segments spans residues Ile4–Val24 and Phe47–Val67.

The protein belongs to the ATPase C chain family. In terms of assembly, F-type ATPases have 2 components, F(1) - the catalytic core - and F(0) - the membrane proton channel. F(1) has five subunits: alpha(3), beta(3), gamma(1), delta(1), epsilon(1). F(0) has three main subunits: a(1), b(2) and c(10-14). The alpha and beta chains form an alternating ring which encloses part of the gamma chain. F(1) is attached to F(0) by a central stalk formed by the gamma and epsilon chains, while a peripheral stalk is formed by the delta and b chains.

It localises to the cell membrane. Its function is as follows. F(1)F(0) ATP synthase produces ATP from ADP in the presence of a proton or sodium gradient. F-type ATPases consist of two structural domains, F(1) containing the extramembraneous catalytic core and F(0) containing the membrane proton channel, linked together by a central stalk and a peripheral stalk. During catalysis, ATP synthesis in the catalytic domain of F(1) is coupled via a rotary mechanism of the central stalk subunits to proton translocation. In terms of biological role, key component of the F(0) channel; it plays a direct role in translocation across the membrane. A homomeric c-ring of between 10-14 subunits forms the central stalk rotor element with the F(1) delta and epsilon subunits. This Pediococcus pentosaceus (strain ATCC 25745 / CCUG 21536 / LMG 10740 / 183-1w) protein is ATP synthase subunit c.